The following is a 728-amino-acid chain: Phosphoribosylformylglycinamidine synthase subunit PurL (728 aa).

H42 is an active-site residue. ATP-binding residues include Y45 and K84. E86 contributes to the Mg(2+) binding site. Residues 87–90 (SHNH) and R109 each bind substrate. The Proton acceptor role is filled by H88. D110 provides a ligand contact to Mg(2+). Q237 is a substrate binding site. D265 is a binding site for Mg(2+). 309–311 (ESQ) is a substrate binding site. Residues D491 and G528 each contribute to the ATP site. N529 is a binding site for Mg(2+). S531 serves as a coordination point for substrate.

This sequence belongs to the FGAMS family. As to quaternary structure, monomer. Part of the FGAM synthase complex composed of 1 PurL, 1 PurQ and 2 PurS subunits.

It localises to the cytoplasm. The enzyme catalyses N(2)-formyl-N(1)-(5-phospho-beta-D-ribosyl)glycinamide + L-glutamine + ATP + H2O = 2-formamido-N(1)-(5-O-phospho-beta-D-ribosyl)acetamidine + L-glutamate + ADP + phosphate + H(+). It functions in the pathway purine metabolism; IMP biosynthesis via de novo pathway; 5-amino-1-(5-phospho-D-ribosyl)imidazole from N(2)-formyl-N(1)-(5-phospho-D-ribosyl)glycinamide: step 1/2. Functionally, part of the phosphoribosylformylglycinamidine synthase complex involved in the purines biosynthetic pathway. Catalyzes the ATP-dependent conversion of formylglycinamide ribonucleotide (FGAR) and glutamine to yield formylglycinamidine ribonucleotide (FGAM) and glutamate. The FGAM synthase complex is composed of three subunits. PurQ produces an ammonia molecule by converting glutamine to glutamate. PurL transfers the ammonia molecule to FGAR to form FGAM in an ATP-dependent manner. PurS interacts with PurQ and PurL and is thought to assist in the transfer of the ammonia molecule from PurQ to PurL. The sequence is that of Phosphoribosylformylglycinamidine synthase subunit PurL from Campylobacter jejuni subsp. jejuni serotype O:23/36 (strain 81-176).